We begin with the raw amino-acid sequence, 114 residues long: Protein S40-2 (114 aa).

A disordered region spans residues 23 to 50; it reads RYTKLYNSRNDEKKGTRRHETAEKTSPV. Positions 31-45 are enriched in basic and acidic residues; it reads RNDEKKGTRRHETAE.

This sequence belongs to the senescence regulator S40 family.

It is found in the cytoplasm. The chain is Protein S40-2 from Arabidopsis thaliana (Mouse-ear cress).